A 113-amino-acid chain; its full sequence is U11-theraphotoxin-Hhn1a (113 aa).

An N-terminal signal peptide occupies residues 1 to 21; sequence MNTVRVTFLLVFVLAVSLGQA. A propeptide spanning residues 22 to 74 is cleaved from the precursor; the sequence is DKDENRMEMQEKTEQGKSYLDFAENLLLQKLEELEAKLPEEDSEESRNSRQKR. Positions 58–69 are enriched in basic and acidic residues; sequence KLPEEDSEESRN. Residues 58 to 82 form a disordered region; the sequence is KLPEEDSEESRNSRQKRCIGEGVPC. Disulfide bonds link C75–C90, C82–C95, and C89–C110.

This sequence belongs to the neurotoxin 14 (magi-1) family. 01 (HNTX-16) subfamily. Expressed by the venom gland.

The protein localises to the secreted. Its function is as follows. Probable ion channel inhibitor. In Cyriopagopus hainanus (Chinese bird spider), this protein is U11-theraphotoxin-Hhn1a.